We begin with the raw amino-acid sequence, 504 residues long: Putative ribose/galactose/methyl galactoside import ATP-binding protein (504 aa).

2 ABC transporter domains span residues 5–242 and 252–497; these read ISVK…GRNL and TSAN…TRRE. An ATP-binding site is contributed by 37 to 44; it reads GENGAGKS.

This sequence belongs to the ABC transporter superfamily. Carbohydrate importer 2 (CUT2) (TC 3.A.1.2) family.

It localises to the cell inner membrane. It catalyses the reaction D-ribose(out) + ATP + H2O = D-ribose(in) + ADP + phosphate + H(+). The enzyme catalyses D-galactose(out) + ATP + H2O = D-galactose(in) + ADP + phosphate + H(+). Functionally, part of an ABC transporter complex involved in carbohydrate import. Could be involved in ribose, galactose and/or methyl galactoside import. Responsible for energy coupling to the transport system. The chain is Putative ribose/galactose/methyl galactoside import ATP-binding protein from Albidiferax ferrireducens (strain ATCC BAA-621 / DSM 15236 / T118) (Rhodoferax ferrireducens).